A 956-amino-acid chain; its full sequence is Thrombospondin-3 (956 aa).

Positions 1–22 are cleaved as a signal peptide; sequence METQELRGALALLLLCFFTSAS. A Laminin G-like domain is found at 23–193; it reads QDLQVIDLLT…VESMKIILGG (171 aa). Intrachain disulfides connect Cys278–Cys289, Cys283–Cys300, Cys303–Cys314, Cys320–Cys332, Cys326–Cys341, Cys344–Cys368, Cys374–Cys388, Cys382–Cys397, Cys400–Cys412, Cys418–Cys432, Cys426–Cys442, Cys444–Cys455, Cys471–Cys478, Cys483–Cys503, Cys519–Cys539, Cys542–Cys562, Cys578–Cys598, Cys601–Cys621, Cys639–Cys659, Cys679–Cys699, and Cys715–Cys936. Residue Asn310 is glycosylated (N-linked (GlcNAc...) asparagine). The region spanning 316 to 354 is the EGF-like 1; calcium-binding domain; that stretch reads DINECAHADPCFPGSSCINTMPGFHCEACPRGYKGTQVS. An EGF-like 2; calcium-binding domain is found at 370–410; it reads DIDECNDGNNGGCDPNSICTNTVGSFKCGPCRLGFLGNQSQ. The N-linked (GlcNAc...) asparagine glycan is linked to Asn407. Positions 414-456 constitute an EGF-like 3 domain; it reads PARTCHSPAHSPCHIHAHCLFERNGAVSCQCNVGWAGNGNVCG. 8 TSP type-3 repeats span residues 457–491, 492–527, 528–550, 551–586, 587–609, 610–647, 648–687, and 688–723; these read TDTDIDGYPDQALPCMDNNKHCKQDNCLLTPNSGQ, EDADNDGVGDQCDDDADGDGIKNVEDNCRLFPNKDQ, QNSDTDSFGDACDNCPNVPNNDQ, KDTDGNGEGDACDNDVDGDGIPNGLDNCPKVPNPLQ, TDRDEDGVGDACDSCPEMSNPTQ, TDADSDLVGDVCDTNEDSDGDGHQDTKDNCPQLPNSSQ, LDSDNDGLGDECDGDDDNDGIPDYVPPGPDNCRLVPNPNQ, and KDSDGNGVGDVCEDDFDNDAVVDPLDVCPESAEVTL. Disordered regions lie at residues 518–537 and 546–702; these read NCRLFPNKDQQNSDTDSFGD and PNND…CEDD. A compositionally biased stretch (acidic residues) spans 555 to 568; the sequence is GNGEGDACDNDVDG. The span at 612–628 shows a compositional bias: acidic residues; sequence ADSDLVGDVCDTNEDSD. An N-linked (GlcNAc...) asparagine glycan is attached at Asn644. Positions 650–667 are enriched in acidic residues; that stretch reads SDNDGLGDECDGDDDNDG. One can recognise a TSP C-terminal domain in the interval 727 to 941; the sequence is RAYQTVVLDP…LQYRCNDTVP (215 aa). Asn937 carries N-linked (GlcNAc...) asparagine glycosylation.

It belongs to the thrombospondin family. As to quaternary structure, oligomer; disulfide-linked.

In terms of biological role, adhesive glycoprotein that mediates cell-to-cell and cell-to-matrix interactions. Can bind to fibrinogen, fibronectin, laminin and type V collagen. The polypeptide is Thrombospondin-3 (THBS3) (Homo sapiens (Human)).